Consider the following 550-residue polypeptide: Chaperonin GroEL (550 aa).

Residues 29–32, Lys-50, 86–90, Gly-417, and Asp-499 contribute to the ATP site; these read TAGP and DGTTT.

Belongs to the chaperonin (HSP60) family. Forms a cylinder of 14 subunits composed of two heptameric rings stacked back-to-back. Interacts with the co-chaperonin GroES.

Its subcellular location is the cytoplasm. The enzyme catalyses ATP + H2O + a folded polypeptide = ADP + phosphate + an unfolded polypeptide.. Together with its co-chaperonin GroES, plays an essential role in assisting protein folding. The GroEL-GroES system forms a nano-cage that allows encapsulation of the non-native substrate proteins and provides a physical environment optimized to promote and accelerate protein folding. The sequence is that of Chaperonin GroEL from Ehrlichia chaffeensis.